Here is a 729-residue protein sequence, read N- to C-terminus: U-box domain-containing protein 17 (729 aa).

The region spanning 304 to 378 (TVPKDFVCPI…VQWCTASGIS (75 aa)) is the U-box domain. ARM repeat units follow at residues 438–477 (KENR…NLSI), 479–520 (EKNK…SLSA), 523–562 (EYKK…NLST), and 564–601 (PDNC…LLVR).

The catalysed reaction is S-ubiquitinyl-[E2 ubiquitin-conjugating enzyme]-L-cysteine + [acceptor protein]-L-lysine = [E2 ubiquitin-conjugating enzyme]-L-cysteine + N(6)-ubiquitinyl-[acceptor protein]-L-lysine.. It participates in protein modification; protein ubiquitination. In terms of biological role, functions as an E3 ubiquitin ligase. In Arabidopsis thaliana (Mouse-ear cress), this protein is U-box domain-containing protein 17 (PUB17).